Consider the following 514-residue polypeptide: CBL-interacting protein kinase 25 (514 aa).

The region spanning 21 to 281 (YEFGPLVGEG…IPEIMEMRWF (261 aa)) is the Protein kinase domain. Residues 27-35 (VGEGNFAKV) and lysine 50 contribute to the ATP site. Residue aspartate 149 is the Proton acceptor of the active site. Positions 167-196 (DFGLSALADMERREAHLQTVCGTPLFLAPE) are activation loop. The interval 303 to 340 (GLDGEPELYDSDTDTIESSSSSESPTPVAGTPRGMHTS) is disordered. Residues 304–317 (LDGEPELYDSDTDT) are compositionally biased toward acidic residues. The span at 318–329 (IESSSSSESPTP) shows a compositional bias: low complexity. The 73-residue stretch at 323 to 395 (SSESPTPVAG…PSFDLSGLFE (73 aa)) folds into the NAF domain. The interval 398 to 427 (GERMRFVSGAPVADIIAKLQEIAGMVSFTA) is PPI.

It belongs to the protein kinase superfamily. CAMK Ser/Thr protein kinase family. SNF1 subfamily. Requires Mn(2+) as cofactor.

It carries out the reaction L-seryl-[protein] + ATP = O-phospho-L-seryl-[protein] + ADP + H(+). The enzyme catalyses L-threonyl-[protein] + ATP = O-phospho-L-threonyl-[protein] + ADP + H(+). CIPK serine-threonine protein kinases interact with CBL proteins. Binding of a CBL protein to the regulatory NAF domain of CIPK protein lead to the activation of the kinase in a calcium-dependent manner. In Oryza sativa subsp. japonica (Rice), this protein is CBL-interacting protein kinase 25 (CIPK25).